Here is a 386-residue protein sequence, read N- to C-terminus: Innexin unc-9 (386 aa).

Helical transmembrane passes span 33-53 (TAII…GFPI), 103-123 (QWVP…TIVW), 197-217 (FLYI…IFLL), and 282-302 (IFLF…CSLF).

It belongs to the pannexin family. In terms of assembly, heterooligomer of unc-7 and unc-9. Interacts with F-actin. Expressed in PLM neurons (at protein level). Expressed in the nerve ring.

It localises to the cell membrane. The protein resides in the cell junction. It is found in the gap junction. In terms of biological role, structural component of gap junctions. Plays a role in maintaining gap junction activity to promote locomotion. The chain is Innexin unc-9 from Caenorhabditis elegans.